The following is a 504-amino-acid chain: Arabinose import ATP-binding protein AraG (504 aa).

2 consecutive ABC transporter domains span residues 8–243 (LSFR…MVGR) and 256–499 (YGEE…MPKV). 40 to 47 (GENGAGKS) lines the ATP pocket.

It belongs to the ABC transporter superfamily. Arabinose importer (TC 3.A.1.2.2) family. The complex is composed of two ATP-binding proteins (AraG), two transmembrane proteins (AraH) and a solute-binding protein (AraF).

The protein localises to the cell inner membrane. It carries out the reaction L-arabinose(out) + ATP + H2O = L-arabinose(in) + ADP + phosphate + H(+). Its function is as follows. Part of the ABC transporter complex AraFGH involved in arabinose import. Responsible for energy coupling to the transport system. The sequence is that of Arabinose import ATP-binding protein AraG from Shigella boydii serotype 4 (strain Sb227).